The chain runs to 190 residues: Peptidyl-tRNA hydrolase (190 aa).

Residue Tyr18 coordinates tRNA. His23 functions as the Proton acceptor in the catalytic mechanism. 3 residues coordinate tRNA: Phe69, Asn71, and Asn117.

The protein belongs to the PTH family. In terms of assembly, monomer.

It is found in the cytoplasm. The enzyme catalyses an N-acyl-L-alpha-aminoacyl-tRNA + H2O = an N-acyl-L-amino acid + a tRNA + H(+). Its function is as follows. Hydrolyzes ribosome-free peptidyl-tRNAs (with 1 or more amino acids incorporated), which drop off the ribosome during protein synthesis, or as a result of ribosome stalling. In terms of biological role, catalyzes the release of premature peptidyl moieties from peptidyl-tRNA molecules trapped in stalled 50S ribosomal subunits, and thus maintains levels of free tRNAs and 50S ribosomes. This chain is Peptidyl-tRNA hydrolase, found in Rhodococcus jostii (strain RHA1).